The primary structure comprises 257 residues: 3-methyl-2-oxobutanoate hydroxymethyltransferase (257 aa).

D42 and D86 together coordinate Mg(2+). Residues 42-43 (DS), D86, and K116 each bind 3-methyl-2-oxobutanoate. A Mg(2+)-binding site is contributed by E118. Catalysis depends on E185, which acts as the Proton acceptor.

It belongs to the PanB family. In terms of assembly, homodecamer; pentamer of dimers. Mg(2+) is required as a cofactor.

The protein resides in the cytoplasm. It carries out the reaction 3-methyl-2-oxobutanoate + (6R)-5,10-methylene-5,6,7,8-tetrahydrofolate + H2O = 2-dehydropantoate + (6S)-5,6,7,8-tetrahydrofolate. It participates in cofactor biosynthesis; (R)-pantothenate biosynthesis; (R)-pantoate from 3-methyl-2-oxobutanoate: step 1/2. In terms of biological role, catalyzes the reversible reaction in which hydroxymethyl group from 5,10-methylenetetrahydrofolate is transferred onto alpha-ketoisovalerate to form ketopantoate. In Prochlorococcus marinus (strain MIT 9312), this protein is 3-methyl-2-oxobutanoate hydroxymethyltransferase.